The sequence spans 499 residues: Probable alkaline/neutral invertase F (499 aa).

Residue Ser-11 is modified to Phosphoserine. Residue Thr-20 is modified to Phosphothreonine. Ser-497 carries the phosphoserine modification.

The protein belongs to the glycosyl hydrolase 100 family.

It carries out the reaction Hydrolysis of terminal non-reducing beta-D-fructofuranoside residues in beta-D-fructofuranosides.. In terms of biological role, invertase that cleaves sucrose into glucose and fructose. The polypeptide is Probable alkaline/neutral invertase F (Arabidopsis thaliana (Mouse-ear cress)).